Here is a 291-residue protein sequence, read N- to C-terminus: Quinol oxidase subunit 2 (291 aa).

The signal sequence occupies residues methionine 1–lysine 28. Helical transmembrane passes span serine 49–isoleucine 69 and leucine 91–valine 111.

It belongs to the cytochrome c oxidase subunit 2 family.

The protein localises to the cell membrane. It carries out the reaction 2 a quinol + O2 = 2 a quinone + 2 H2O. Its function is as follows. Catalyzes quinol oxidation with the concomitant reduction of oxygen to water. Subunit II transfers the electrons from a quinol to the binuclear center of the catalytic subunit I. The sequence is that of Quinol oxidase subunit 2 from Bacillus cereus (strain ATCC 14579 / DSM 31 / CCUG 7414 / JCM 2152 / NBRC 15305 / NCIMB 9373 / NCTC 2599 / NRRL B-3711).